A 390-amino-acid chain; its full sequence is Na(+)/H(+) antiporter NhaA 1 (390 aa).

Transmembrane regions (helical) follow at residues 14–34 (SGIL…NGVL), 59–79 (TILW…GLEL), 94–114 (VALP…IFYV), 125–145 (GWAI…FLLG), 154–174 (LFLL…IAIF), 179–199 (LSII…ILNY), 205–225 (IYIY…SGIH), 260–280 (PIVA…VVFS), 295–315 (IIFG…FLAI), 328–348 (WLHL…SLFI), and 362–382 (ANKI…YFVL).

This sequence belongs to the NhaA Na(+)/H(+) (TC 2.A.33) antiporter family.

Its subcellular location is the cell inner membrane. It catalyses the reaction Na(+)(in) + 2 H(+)(out) = Na(+)(out) + 2 H(+)(in). Na(+)/H(+) antiporter that extrudes sodium in exchange for external protons. This is Na(+)/H(+) antiporter NhaA 1 from Campylobacter fetus subsp. fetus (strain 82-40).